The primary structure comprises 498 residues: MADNKTENTLSSDATEVRAQKLKLLREQIGDVYPAHFHRSLTNAELATRYEGLDPDVETQDIVTVAGRVYSSRNSGMFMDIHDASGKIQIFSHKDVTGEEARALLPMIDIGDIIGVTGIVRRTKRGELTINAQKIEMLTKSLLPMPEKWHGLSDIELRYRKRHLDILTNEDSKLRFQQRSKIVSGIRRFMENDGFMEVETPMLQSIYGGATAEPFKTHHNTLKLDMYLRIAPELFLKRTLVSGLTDKVFEINRNFRNEGVSTRHNPEFTMMECYWAYADYEDMMDLVERLFETLALSIHGTTEFDFGDKRLSFKGPFKRVPMPDAVKEVTGIDFLAIKTDEEARAAAKAAGFAVEKDWTWGECLAFIFEEKVEATLIQPSHVTHFPKDISPFAKEVPGEPRLVERFETYCNAWELGNAFSELNDPEEQRRRMVEQLEQAHARGEKEKQLDEEFLDAIDQGMPPAGGLGIGVDRLIMLLTNAPSIRDVILFPARRSKAD.

Mg(2+) is bound by residues Glu-407 and Glu-414.

It belongs to the class-II aminoacyl-tRNA synthetase family. Homodimer. The cofactor is Mg(2+).

The protein resides in the cytoplasm. It carries out the reaction tRNA(Lys) + L-lysine + ATP = L-lysyl-tRNA(Lys) + AMP + diphosphate. The polypeptide is Lysine--tRNA ligase (Rhizobium etli (strain ATCC 51251 / DSM 11541 / JCM 21823 / NBRC 15573 / CFN 42)).